A 426-amino-acid chain; its full sequence is Glutamate-1-semialdehyde 2,1-aminomutase (426 aa).

Lys265 carries the post-translational modification N6-(pyridoxal phosphate)lysine.

It belongs to the class-III pyridoxal-phosphate-dependent aminotransferase family. HemL subfamily. Homodimer. Requires pyridoxal 5'-phosphate as cofactor.

Its subcellular location is the cytoplasm. It carries out the reaction (S)-4-amino-5-oxopentanoate = 5-aminolevulinate. It functions in the pathway porphyrin-containing compound metabolism; protoporphyrin-IX biosynthesis; 5-aminolevulinate from L-glutamyl-tRNA(Glu): step 2/2. This is Glutamate-1-semialdehyde 2,1-aminomutase from Marinobacter nauticus (strain ATCC 700491 / DSM 11845 / VT8) (Marinobacter aquaeolei).